Here is a 389-residue protein sequence, read N- to C-terminus: G2/M cell-cycle inhibitor DR6 (389 aa).

Belongs to the Roseolovirus DR6 family.

The protein localises to the host nucleus. Inhibits the host G2/M cell-cycle progression in a p53-independent manner. This chain is G2/M cell-cycle inhibitor DR6 (DR6L), found in Homo sapiens (Human).